A 178-amino-acid chain; its full sequence is Inner membrane-spanning protein YciB (178 aa).

Transmembrane regions (helical) follow at residues 22 to 42 (IFVA…VSWL), 50 to 70 (MALF…ALHN), 76 to 96 (WKVT…HWFM), 121 to 141 (IAWA…AFWL), and 149 to 169 (FKVF…GIYI).

It belongs to the YciB family.

It localises to the cell inner membrane. Plays a role in cell envelope biogenesis, maintenance of cell envelope integrity and membrane homeostasis. This chain is Inner membrane-spanning protein YciB, found in Erwinia tasmaniensis (strain DSM 17950 / CFBP 7177 / CIP 109463 / NCPPB 4357 / Et1/99).